The chain runs to 274 residues: Diaminopimelate epimerase (274 aa).

N11, Q44, and N64 together coordinate substrate. The Proton donor role is filled by C73. Substrate-binding positions include G74–N75, N157, N190, and E208–R209. Catalysis depends on C217, which acts as the Proton acceptor. G218–S219 is a binding site for substrate.

The protein belongs to the diaminopimelate epimerase family. As to quaternary structure, homodimer.

The protein localises to the cytoplasm. The enzyme catalyses (2S,6S)-2,6-diaminopimelate = meso-2,6-diaminopimelate. The protein operates within amino-acid biosynthesis; L-lysine biosynthesis via DAP pathway; DL-2,6-diaminopimelate from LL-2,6-diaminopimelate: step 1/1. In terms of biological role, catalyzes the stereoinversion of LL-2,6-diaminopimelate (L,L-DAP) to meso-diaminopimelate (meso-DAP), a precursor of L-lysine and an essential component of the bacterial peptidoglycan. The protein is Diaminopimelate epimerase of Glaesserella parasuis serovar 5 (strain SH0165) (Haemophilus parasuis).